The following is a 163-amino-acid chain: NADH-quinone oxidoreductase subunit I (163 aa).

2 consecutive 4Fe-4S ferredoxin-type domains span residues 55 to 84 (RRYENGEERCIACKLCEAVCPANAITIESE) and 94 to 123 (TQYDIDMFKCIYCGFCEEACPVDAVVETRV). [4Fe-4S] cluster contacts are provided by cysteine 64, cysteine 67, cysteine 70, cysteine 74, cysteine 103, cysteine 106, cysteine 109, and cysteine 113.

It belongs to the complex I 23 kDa subunit family. NDH-1 is composed of 14 different subunits. Subunits NuoA, H, J, K, L, M, N constitute the membrane sector of the complex. Requires [4Fe-4S] cluster as cofactor.

The protein resides in the cell inner membrane. It catalyses the reaction a quinone + NADH + 5 H(+)(in) = a quinol + NAD(+) + 4 H(+)(out). Its function is as follows. NDH-1 shuttles electrons from NADH, via FMN and iron-sulfur (Fe-S) centers, to quinones in the respiratory chain. The immediate electron acceptor for the enzyme in this species is believed to be ubiquinone. Couples the redox reaction to proton translocation (for every two electrons transferred, four hydrogen ions are translocated across the cytoplasmic membrane), and thus conserves the redox energy in a proton gradient. The protein is NADH-quinone oxidoreductase subunit I of Hydrogenovibrio crunogenus (strain DSM 25203 / XCL-2) (Thiomicrospira crunogena).